A 272-amino-acid chain; its full sequence is R3H domain-containing protein 4 (272 aa).

The segment at 141–167 (LEDEGKSKARRRGPTRGEDRRREDPAY) is disordered. Basic and acidic residues predominate over residues 155 to 165 (TRGEDRRREDP). One can recognise an R3H domain in the interval 191 to 254 (METLETWEER…KRQMKVSNRH (64 aa)).

It is found in the nucleus. The polypeptide is R3H domain-containing protein 4 (R3HDM4) (Bos taurus (Bovine)).